The following is a 96-amino-acid chain: Small ribosomal subunit protein uS19 (96 aa).

Positions 1–30 are disordered; it reads MARSIKKGPFADKHLTKKVEDANKGNKKSV. The span at 9 to 24 shows a compositional bias: basic and acidic residues; the sequence is PFADKHLTKKVEDANK.

This sequence belongs to the universal ribosomal protein uS19 family.

Functionally, protein S19 forms a complex with S13 that binds strongly to the 16S ribosomal RNA. The sequence is that of Small ribosomal subunit protein uS19 from Anaeromyxobacter sp. (strain Fw109-5).